The primary structure comprises 592 residues: Aspartate--tRNA(Asp/Asn) ligase (592 aa).

E182 is a binding site for L-aspartate. Residues 206-209 form an aspartate region; the sequence is QIFK. An L-aspartate-binding site is contributed by R228. ATP is bound by residues 228 to 230 and Q237; that span reads RDE. H455 is an L-aspartate binding site. Position 489 (E489) interacts with ATP. Position 496 (R496) interacts with L-aspartate. 541–544 serves as a coordination point for ATP; that stretch reads GLDR.

Belongs to the class-II aminoacyl-tRNA synthetase family. Type 1 subfamily. As to quaternary structure, homodimer.

Its subcellular location is the cytoplasm. The enzyme catalyses tRNA(Asx) + L-aspartate + ATP = L-aspartyl-tRNA(Asx) + AMP + diphosphate. Aspartyl-tRNA synthetase with relaxed tRNA specificity since it is able to aspartylate not only its cognate tRNA(Asp) but also tRNA(Asn). Reaction proceeds in two steps: L-aspartate is first activated by ATP to form Asp-AMP and then transferred to the acceptor end of tRNA(Asp/Asn). This is Aspartate--tRNA(Asp/Asn) ligase from Thermoanaerobacter sp. (strain X514).